Reading from the N-terminus, the 153-residue chain is Small ribosomal subunit protein uS5 (153 aa).

The 64-residue stretch at 15–78 folds into the S5 DRBM domain; sequence FQEVVVNIGR…DDAFKNLIHV (64 aa).

Belongs to the universal ribosomal protein uS5 family. As to quaternary structure, part of the 30S ribosomal subunit. Contacts proteins S4 and S8.

With S4 and S12 plays an important role in translational accuracy. Functionally, located at the back of the 30S subunit body where it stabilizes the conformation of the head with respect to the body. This is Small ribosomal subunit protein uS5 from Helicobacter pylori (strain P12).